A 274-amino-acid chain; its full sequence is Transcription factor Ovo-like 2 (274 aa).

The span at 1 to 11 (MPKVFLVKRRS) shows a compositional bias: basic residues. The tract at residues 1-88 (MPKVFLVKRR…ETPELHDAQG (88 aa)) is disordered. The span at 18-29 (SWDELPDDKRAD) shows a compositional bias: basic and acidic residues. Residues 50 to 74 (DGGSSSGCSSSAGEPGGAESSSSPR) show a composition bias toward low complexity. C2H2-type zinc fingers lie at residues 118 to 140 (HNCD…LKCH), 146 to 168 (HLCT…VRTH), 174 to 197 (YKCE…KKIH), and 213 to 236 (YVCE…NSDH). Serine 268 is modified (phosphoserine).

It belongs to the krueppel C2H2-type zinc-finger protein family. As to quaternary structure, interacts (via zinc-finger domains) with CEBPA (via bZIP domain); the interaction inhibits the transcription factor activity of CEBPA and is required to repress adipogenesis. In terms of tissue distribution, expressed highly in testis, specifically in spermatocytes. Expressed also in skin and at lower levels in the ovary. Expressed in adipose tissues. Expression is lower than in testis and a relatively higher expression level is detected in the stromal vascular fraction (SVF) than in fat cells themselves.

The protein resides in the nucleus. Zinc-finger transcription repressor factor. Plays a critical role in maintaining the identity of epithelial lineages by suppressing epithelial-to mesenchymal transition (EMT) mainly through the repression of ZEB1, an EMT inducer. Positively regulates neuronal differentiation. Suppresses cell cycling and terminal differentiation of keratinocytes by directly repressing MYC and NOTCH1. Important for the correct development of primordial germ cells in embryos. Plays dual functions in thermogenesis and adipogenesis to maintain energy balance. Essential for brown/beige adipose tissue-mediated thermogenesis, is necessary for the development of brown adipocytes. In white adipose tissues, limits adipogenesis by blocking CEBPA binding to its transcriptional targets and inhibiting its transcription factor activity. The chain is Transcription factor Ovo-like 2 from Mus musculus (Mouse).